Consider the following 233-residue polypeptide: MKKTIMASSLAVALGVTGYAASTGHEAHAAEMNVDQAHLVDLAHNHQDQLNAAPIKDGAYDIHFVKDGFQYNFTSNGTTWSWSYEAANGQTAGFSNVAGADYTTSYNQGSNVQSVSYNAQSSNSNVEAVSAPTYHNYSTSTTSSSVRLSNGNTAGATGSSAAQIMAQRTGVSASTWAAIIARESNGQVNAYNPSGASGLFQTMPGWGPTNTVDQQINAAVKAYKAQGLSAWGF.

An N-terminal signal peptide occupies residues 1–29; sequence MKKTIMASSLAVALGVTGYAASTGHEAHA.

Belongs to the transglycosylase family. IsaA subfamily.

It is found in the secreted. Its function is as follows. Is able to cleave peptidoglycan. This chain is Probable transglycosylase IsaA (isaA), found in Staphylococcus aureus (strain bovine RF122 / ET3-1).